We begin with the raw amino-acid sequence, 81 residues long: Protein Vpu (81 aa).

The Extracellular segment spans residues 1 to 7; sequence MQSLQIL. Residues 8–28 traverse the membrane as a helical segment; that stretch reads AIVSLVVVAIIAIVVWTIVLI. Residues 29-81 lie on the Cytoplasmic side of the membrane; the sequence is EYRKILRQRKIDRLFDRIREKAEDSGNESERDQEELSALVEMGHLAPWDVDDL. 2 positions are modified to phosphoserine; by host CK2: Ser-53 and Ser-57.

The protein belongs to the HIV-1 VPU protein family. As to quaternary structure, homopentamer. Interacts with host CD4 and BRTC; these interactions induce proteasomal degradation of CD4. Interacts with host BST2; this interaction leads to the degradation of host BST2. Interacts with host FBXW11. Interacts with host AP1M1; this interaction plays a role in the mistrafficking and subsequent degradation of host BST2. Interacts with host RANBP2; this interaction allows Vpu to down-regulate host BLM sumoylation. Phosphorylated by host CK2. This phosphorylation is necessary for interaction with human BTRC and degradation of CD4.

The protein localises to the host membrane. With respect to regulation, ion channel activity is inhibited by hexamethylene amiloride in vitro. Its function is as follows. Enhances virion budding by targeting host CD4 and Tetherin/BST2 to proteasome degradation. Degradation of CD4 prevents any unwanted premature interactions between viral Env and its host receptor CD4 in the endoplasmic reticulum. Degradation of antiretroviral protein Tetherin/BST2 is important for virion budding, as BST2 tethers new viral particles to the host cell membrane. Mechanistically, Vpu bridges either CD4 or BST2 to BTRC, a substrate recognition subunit of the Skp1/Cullin/F-box protein E3 ubiquitin ligase, induces their ubiquitination and subsequent proteasomal degradation. The alteration of the E3 ligase specificity by Vpu seems to promote the degradation of host IKBKB, leading to NF-kappa-B down-regulation and subsequent apoptosis. Acts as a viroporin that forms an oligomeric ion channel in membranes. Modulates the host DNA repair mechanisms to promote degradation of nuclear viral cDNA in cells that are already productively infected in order to suppress immune sensing and proviral hyper-integration (superinfection). Manipulates PML-NBs and modulates SUMOylation of host BLM protein thereby enhancing its DNA-end processing activity toward viral unintegrated linear DNA. Also inhibits RAD52-mediated homologous repair of viral cDNA, preventing the generation of dead-end circular forms of single copies of the long terminal repeat and permitting sustained nucleolytic attack. This Homo sapiens (Human) protein is Protein Vpu.